Consider the following 129-residue polypeptide: UPF0148 protein APE_0207 (129 aa).

This sequence belongs to the UPF0148 family.

This is UPF0148 protein APE_0207 from Aeropyrum pernix (strain ATCC 700893 / DSM 11879 / JCM 9820 / NBRC 100138 / K1).